The sequence spans 183 residues: Extracellular superoxide dismutase [Cu-Zn] (183 aa).

A signal peptide spans 1–32 (MTMLQQILLISVIIGTVHVHEVDCANEVLKAR). An N-linked (GlcNAc...) asparagine glycan is attached at N63. Positions 77, 79, and 94 each coordinate Cu cation. C88 and C177 are oxidised to a cystine. Zn(2+) is bound by residues H94, H102, H111, and D114. H151 serves as a coordination point for Cu cation.

The protein belongs to the Cu-Zn superoxide dismutase family. Requires Cu cation as cofactor. Zn(2+) is required as a cofactor.

Its subcellular location is the secreted. The protein resides in the extracellular space. The catalysed reaction is 2 superoxide + 2 H(+) = H2O2 + O2. Functionally, destroys radicals which are normally produced within the cells and which are toxic to biological systems. The sequence is that of Extracellular superoxide dismutase [Cu-Zn] (SOD) from Haemonchus contortus (Barber pole worm).